Reading from the N-terminus, the 78-residue chain is Translation initiation factor IF-1, chloroplastic (78 aa).

The S1-like domain maps to 1–72 (MKKQNLIEME…TKGRITYRLR (72 aa)).

The protein belongs to the IF-1 family. Component of the 30S ribosomal translation pre-initiation complex which assembles on the 30S ribosome in the order IF-2 and IF-3, IF-1 and N-formylmethionyl-tRNA(fMet); mRNA recruitment can occur at any time during PIC assembly.

The protein localises to the plastid. It is found in the chloroplast. Its function is as follows. One of the essential components for the initiation of protein synthesis. Stabilizes the binding of IF-2 and IF-3 on the 30S subunit to which N-formylmethionyl-tRNA(fMet) subsequently binds. Helps modulate mRNA selection, yielding the 30S pre-initiation complex (PIC). Upon addition of the 50S ribosomal subunit IF-1, IF-2 and IF-3 are released leaving the mature 70S translation initiation complex. The polypeptide is Translation initiation factor IF-1, chloroplastic (Chaetosphaeridium globosum (Charophycean green alga)).